A 312-amino-acid polypeptide reads, in one-letter code: Ribosomal RNA small subunit methyltransferase H (312 aa).

S-adenosyl-L-methionine contacts are provided by residues 34–36, aspartate 54, phenylalanine 81, aspartate 102, and glutamine 109; that span reads GGH.

Belongs to the methyltransferase superfamily. RsmH family.

Its subcellular location is the cytoplasm. The catalysed reaction is cytidine(1402) in 16S rRNA + S-adenosyl-L-methionine = N(4)-methylcytidine(1402) in 16S rRNA + S-adenosyl-L-homocysteine + H(+). Functionally, specifically methylates the N4 position of cytidine in position 1402 (C1402) of 16S rRNA. The chain is Ribosomal RNA small subunit methyltransferase H from Geotalea uraniireducens (strain Rf4) (Geobacter uraniireducens).